A 156-amino-acid polypeptide reads, in one-letter code: Arginine repressor (156 aa).

Belongs to the ArgR family.

It localises to the cytoplasm. It participates in amino-acid biosynthesis; L-arginine biosynthesis [regulation]. In terms of biological role, regulates arginine biosynthesis genes. The chain is Arginine repressor from Vibrio atlanticus (strain LGP32) (Vibrio splendidus (strain Mel32)).